Consider the following 211-residue polypeptide: Thiamine-phosphate synthase (211 aa).

Residues 37 to 41 and Asn-69 contribute to the 4-amino-2-methyl-5-(diphosphooxymethyl)pyrimidine site; that span reads QLRIK. Positions 70 and 89 each coordinate Mg(2+). 4-amino-2-methyl-5-(diphosphooxymethyl)pyrimidine is bound at residue Ser-108. 2-[(2R,5Z)-2-carboxy-4-methylthiazol-5(2H)-ylidene]ethyl phosphate is bound at residue 134-136; it reads TQT. Lys-137 lines the 4-amino-2-methyl-5-(diphosphooxymethyl)pyrimidine pocket. 2-[(2R,5Z)-2-carboxy-4-methylthiazol-5(2H)-ylidene]ethyl phosphate contacts are provided by residues Gly-166 and 186–187; that span reads VS.

This sequence belongs to the thiamine-phosphate synthase family. The cofactor is Mg(2+).

The enzyme catalyses 2-[(2R,5Z)-2-carboxy-4-methylthiazol-5(2H)-ylidene]ethyl phosphate + 4-amino-2-methyl-5-(diphosphooxymethyl)pyrimidine + 2 H(+) = thiamine phosphate + CO2 + diphosphate. It carries out the reaction 2-(2-carboxy-4-methylthiazol-5-yl)ethyl phosphate + 4-amino-2-methyl-5-(diphosphooxymethyl)pyrimidine + 2 H(+) = thiamine phosphate + CO2 + diphosphate. The catalysed reaction is 4-methyl-5-(2-phosphooxyethyl)-thiazole + 4-amino-2-methyl-5-(diphosphooxymethyl)pyrimidine + H(+) = thiamine phosphate + diphosphate. It functions in the pathway cofactor biosynthesis; thiamine diphosphate biosynthesis; thiamine phosphate from 4-amino-2-methyl-5-diphosphomethylpyrimidine and 4-methyl-5-(2-phosphoethyl)-thiazole: step 1/1. Functionally, condenses 4-methyl-5-(beta-hydroxyethyl)thiazole monophosphate (THZ-P) and 2-methyl-4-amino-5-hydroxymethyl pyrimidine pyrophosphate (HMP-PP) to form thiamine monophosphate (TMP). The sequence is that of Thiamine-phosphate synthase from Escherichia coli O139:H28 (strain E24377A / ETEC).